Consider the following 315-residue polypeptide: Ribosomal RNA small subunit methyltransferase H (315 aa).

S-adenosyl-L-methionine is bound by residues 35 to 37 (GGH), aspartate 55, phenylalanine 80, aspartate 102, and glutamine 109.

The protein belongs to the methyltransferase superfamily. RsmH family.

It localises to the cytoplasm. The catalysed reaction is cytidine(1402) in 16S rRNA + S-adenosyl-L-methionine = N(4)-methylcytidine(1402) in 16S rRNA + S-adenosyl-L-homocysteine + H(+). Functionally, specifically methylates the N4 position of cytidine in position 1402 (C1402) of 16S rRNA. This is Ribosomal RNA small subunit methyltransferase H from Shewanella pealeana (strain ATCC 700345 / ANG-SQ1).